Reading from the N-terminus, the 1035-residue chain is Sulfite reductase [NADPH] flavoprotein component (1035 aa).

Residues 648 to 879 (VKNFVVKVKE…VKPSVMKLPP (232 aa)) form the FAD-binding FR-type domain. FAD contacts are provided by residues 684 to 695 (YDIGEALGIHAR) and 814 to 824 (LKRREYSIASS).

The cofactor is FAD. FMN is required as a cofactor.

The catalysed reaction is hydrogen sulfide + 3 NADP(+) + 3 H2O = sulfite + 3 NADPH + 4 H(+). The protein operates within sulfur metabolism; hydrogen sulfide biosynthesis; hydrogen sulfide from sulfite (NADPH route): step 1/1. Its function is as follows. This enzyme catalyzes the 6-electron reduction of sulfite to sulfide. This is one of several activities required for the biosynthesis of L-cysteine from sulfate. This chain is Sulfite reductase [NADPH] flavoprotein component (MET10), found in Saccharomyces cerevisiae (strain ATCC 204508 / S288c) (Baker's yeast).